We begin with the raw amino-acid sequence, 101 residues long: Large ribosomal subunit protein bL21 (101 aa).

This sequence belongs to the bacterial ribosomal protein bL21 family. Part of the 50S ribosomal subunit. Contacts protein L20.

This protein binds to 23S rRNA in the presence of protein L20. This is Large ribosomal subunit protein bL21 from Sulfurovum sp. (strain NBC37-1).